A 156-amino-acid chain; its full sequence is Small ribosomal subunit protein uS7 (156 aa).

This sequence belongs to the universal ribosomal protein uS7 family. As to quaternary structure, part of the 30S ribosomal subunit. Contacts proteins S9 and S11.

Its function is as follows. One of the primary rRNA binding proteins, it binds directly to 16S rRNA where it nucleates assembly of the head domain of the 30S subunit. Is located at the subunit interface close to the decoding center, probably blocks exit of the E-site tRNA. This Roseobacter denitrificans (strain ATCC 33942 / OCh 114) (Erythrobacter sp. (strain OCh 114)) protein is Small ribosomal subunit protein uS7.